We begin with the raw amino-acid sequence, 379 residues long: Protein COS4 (379 aa).

A run of 4 helical transmembrane segments spans residues 43–63, 70–90, 233–253, and 255–275; these read IYKSLAFRIWMLLWLPLSVWW, IYPLMVSLLVLFWGPVFVLVI, ISNIFMLIPFLNFLCCIYVSR, and MCLLLRTLYLGWILFMLVQGF.

Belongs to the DUP/COS family.

The protein resides in the membrane. This Saccharomyces cerevisiae (strain ATCC 204508 / S288c) (Baker's yeast) protein is Protein COS4 (COS4).